Reading from the N-terminus, the 317-residue chain is Probable cell division protein WhiA (317 aa).

Positions 281 to 314 form a DNA-binding region, H-T-H motif; it reads TLKELGEMINPPIGKSGVNHRLRKLDQIADRERG.

The protein belongs to the WhiA family.

Functionally, involved in cell division and chromosome segregation. The sequence is that of Probable cell division protein WhiA from Alkaliphilus metalliredigens (strain QYMF).